We begin with the raw amino-acid sequence, 140 residues long: Small ribosomal subunit protein uS12 (140 aa).

Disordered regions lie at residues 36–56 (TYNPSPYKRGVCTRVGTMTPK) and 117–140 (TSGVEKRRQQRSGYGAKRPKEKKE).

It belongs to the universal ribosomal protein uS12 family. In terms of assembly, part of the 30S ribosomal subunit. Contacts proteins S8 and S17. May interact with IF1 in the 30S initiation complex.

With S4 and S5 plays an important role in translational accuracy. Its function is as follows. Interacts with and stabilizes bases of the 16S rRNA that are involved in tRNA selection in the A site and with the mRNA backbone. Located at the interface of the 30S and 50S subunits, it traverses the body of the 30S subunit contacting proteins on the other side and probably holding the rRNA structure together. The combined cluster of proteins S8, S12 and S17 appears to hold together the shoulder and platform of the 30S subunit. This Malacoplasma penetrans (strain HF-2) (Mycoplasma penetrans) protein is Small ribosomal subunit protein uS12.